The primary structure comprises 511 residues: ATP synthase subunit alpha, mitochondrial (511 aa).

171–178 (GDRQTGKT) provides a ligand contact to ATP.

It belongs to the ATPase alpha/beta chains family. F-type ATPases have 2 components, CF(1) - the catalytic core - and CF(0) - the membrane proton channel. CF(1) has five subunits: alpha(3), beta(3), gamma(1), delta(1), epsilon(1). CF(0) has three main subunits: a, b and c.

Its subcellular location is the mitochondrion. It localises to the mitochondrion inner membrane. Functionally, mitochondrial membrane ATP synthase (F(1)F(0) ATP synthase or Complex V) produces ATP from ADP in the presence of a proton gradient across the membrane which is generated by electron transport complexes of the respiratory chain. F-type ATPases consist of two structural domains, F(1) - containing the extramembraneous catalytic core, and F(0) - containing the membrane proton channel, linked together by a central stalk and a peripheral stalk. During catalysis, ATP synthesis in the catalytic domain of F(1) is coupled via a rotary mechanism of the central stalk subunits to proton translocation. Subunits alpha and beta form the catalytic core in F(1). Rotation of the central stalk against the surrounding alpha(3)beta(3) subunits leads to hydrolysis of ATP in three separate catalytic sites on the beta subunits. Subunit alpha does not bear the catalytic high-affinity ATP-binding sites. In Oenothera biennis (German evening primrose), this protein is ATP synthase subunit alpha, mitochondrial (ATPA).